A 307-amino-acid polypeptide reads, in one-letter code: Ribonuclease Z (307 aa).

Residues H63, H65, D67, H68, H141, D212, and H270 each coordinate Zn(2+). D67 serves as the catalytic Proton acceptor.

The protein belongs to the RNase Z family. As to quaternary structure, homodimer. The cofactor is Zn(2+).

The enzyme catalyses Endonucleolytic cleavage of RNA, removing extra 3' nucleotides from tRNA precursor, generating 3' termini of tRNAs. A 3'-hydroxy group is left at the tRNA terminus and a 5'-phosphoryl group is left at the trailer molecule.. Functionally, zinc phosphodiesterase, which displays some tRNA 3'-processing endonuclease activity. Probably involved in tRNA maturation, by removing a 3'-trailer from precursor tRNA. The protein is Ribonuclease Z of Bacillus thuringiensis subsp. konkukian (strain 97-27).